Reading from the N-terminus, the 239-residue chain is Ribosomal RNA small subunit methyltransferase G (239 aa).

S-adenosyl-L-methionine-binding positions include glycine 78, phenylalanine 83, 129–130 (AE), and arginine 148.

It belongs to the methyltransferase superfamily. RNA methyltransferase RsmG family.

It is found in the cytoplasm. Its function is as follows. Specifically methylates the N7 position of a guanine in 16S rRNA. This is Ribosomal RNA small subunit methyltransferase G from Clostridium botulinum (strain Okra / Type B1).